The chain runs to 205 residues: Large ribosomal subunit protein uL4 (205 aa).

Residues 54-78 (GDISGTTAKPHRQKHTGRARQGSLR) form a disordered region. Residues 62-71 (KPHRQKHTGR) are compositionally biased toward basic residues.

This sequence belongs to the universal ribosomal protein uL4 family. In terms of assembly, part of the 50S ribosomal subunit.

Functionally, one of the primary rRNA binding proteins, this protein initially binds near the 5'-end of the 23S rRNA. It is important during the early stages of 50S assembly. It makes multiple contacts with different domains of the 23S rRNA in the assembled 50S subunit and ribosome. Its function is as follows. Forms part of the polypeptide exit tunnel. The protein is Large ribosomal subunit protein uL4 of Ehrlichia chaffeensis (strain ATCC CRL-10679 / Arkansas).